A 369-amino-acid polypeptide reads, in one-letter code: Xylene/toluene monooxygenase hydroxylase component XylM (369 aa).

The next 3 helical transmembrane spans lie at 8–28 (LIPV…YWVW), 60–80 (LTQY…VFGV), and 91–111 (LQVA…TLPV). Positions 113, 117, 143, 147, and 148 each coordinate Fe cation. Residues 207–227 (VALLLALPGLVSYLGGPALGL) form a helical membrane-spanning segment. Residues histidine 282, histidine 285, and histidine 286 each contribute to the Fe cation site. Residues 305–325 (MPSLFVCFLLGLIPPLWFALI) form a helical membrane-spanning segment.

Belongs to the fatty acid desaturase type 1 family. AlkB subfamily. As to quaternary structure, the xylene/toluene monooxygenase is composed of two subunits: the electron transfer component XylA and the hydroxylase component XylM. Requires Fe(2+) as cofactor.

It localises to the cell inner membrane. The catalysed reaction is m-xylene + 2 reduced [2Fe-2S]-[ferredoxin] + O2 + 2 H(+) = 3-methylbenzyl alcohol + 2 oxidized [2Fe-2S]-[ferredoxin] + H2O. The enzyme catalyses p-xylene + 2 reduced [2Fe-2S]-[ferredoxin] + O2 + 2 H(+) = 4-methylbenzyl alcohol + 2 oxidized [2Fe-2S]-[ferredoxin] + H2O. It carries out the reaction toluene + 2 reduced [2Fe-2S]-[ferredoxin] + O2 + 2 H(+) = benzyl alcohol + 2 oxidized [2Fe-2S]-[ferredoxin] + H2O. Its function is as follows. Component of a monooxygenase that catalyzes the first step in the degradation of xylenes and toluenes. XylM catalyzes the hydroxylation of the methyl side chain of xylenes and toluenes. The electrons are provided by the electron transfer component XylA. The best substrates are m-xylene and p-xylene, followed by toluene. Shows weak activity with o-xylene. In vitro, is also active with substituted compounds, such as chlorotoluenes. Cannot use benzyl alcohol. This Pseudomonas putida (Arthrobacter siderocapsulatus) protein is Xylene/toluene monooxygenase hydroxylase component XylM.